A 516-amino-acid polypeptide reads, in one-letter code: MLNPKVAYMVWMTCLGLTLPSQAQSNDYRPSYHFTPDQYWMNEPNGLIKIGSTWHLFFQHNPTANVWGNICWGHATSTDLMHWAYKPTAIADENGVEAFTGTAYYDPNNTSGLGDSANPPYLAWFTGYTTSSQTQDQRLAFSVDNGATWTKFQGNPIISTSQEAPHDITGGLESRDPKVFFHRQSGNWIMVLAHGGQDKLSFWTSADTIHWTWQSDLKSTSINGLSSDITGWEVPDMFELPVEGTGETTWVVMMTPAEGSPAGGNGVLAITGSFDGKTFTADPVDASTMWLDNGRDFDGALSWVNVPASDGRRIIAAVMNSYGSNPPTTTWKGMLSFPRTLSLKKVGTQQHFVQQPITELDTISTSMQTLANQTITPGQTLLSSIRGTALDVRVAFYPDAGSVLSLTVRKGASEQTVINYTQSNATLSVDRTESGDISYDPAAGGVHTAKLEEDGTGLVSIRVLVDTCSVEVFGGQGEAVISDLIFPSDSSDGLALEVTGGNAVLQSVDVRSVSLE.

Positions 1-25 are cleaved as a signal peptide; that stretch reads MLNPKVAYMVWMTCLGLTLPSQAQS. Substrate-binding positions include 40–43, Q59, W67, and 99–100; these read WMNE and FT. Residue E43 is part of the active site. A glycan (N-linked (GlcNAc...) asparagine) is linked at N109. Substrate is bound by residues 175 to 176 and E233; that span reads RD. Residues N372, N419, and N424 are each glycosylated (N-linked (GlcNAc...) asparagine).

This sequence belongs to the glycosyl hydrolase 32 family.

The protein localises to the secreted. It catalyses the reaction Endohydrolysis of (2-&gt;1)-beta-D-fructosidic linkages in inulin.. Functionally, endo-inulinase involved in utilization of the plant storage polymer inulin, consisting of fructooligosaccharides with a degree of polymerization (DP) value from 2 to 60. In Aspergillus niger, this protein is Extracellular endo-inulinase inuB (inuB).